Here is a 629-residue protein sequence, read N- to C-terminus: tRNA uridine 5-carboxymethylaminomethyl modification enzyme MnmG (629 aa).

Residue 13-18 coordinates FAD; it reads GGGHAG. Residue 273 to 287 coordinates NAD(+); the sequence is GPRYCPSIEDKIVRF.

It belongs to the MnmG family. In terms of assembly, homodimer. Heterotetramer of two MnmE and two MnmG subunits. Requires FAD as cofactor.

The protein resides in the cytoplasm. Its function is as follows. NAD-binding protein involved in the addition of a carboxymethylaminomethyl (cmnm) group at the wobble position (U34) of certain tRNAs, forming tRNA-cmnm(5)s(2)U34. In Marinomonas sp. (strain MWYL1), this protein is tRNA uridine 5-carboxymethylaminomethyl modification enzyme MnmG.